The chain runs to 307 residues: Methionyl-tRNA formyltransferase (307 aa).

A (6S)-5,6,7,8-tetrahydrofolate-binding site is contributed by 108–111; that stretch reads SLLP.

This sequence belongs to the Fmt family.

The catalysed reaction is L-methionyl-tRNA(fMet) + (6R)-10-formyltetrahydrofolate = N-formyl-L-methionyl-tRNA(fMet) + (6S)-5,6,7,8-tetrahydrofolate + H(+). Its function is as follows. Attaches a formyl group to the free amino group of methionyl-tRNA(fMet). The formyl group appears to play a dual role in the initiator identity of N-formylmethionyl-tRNA by promoting its recognition by IF2 and preventing the misappropriation of this tRNA by the elongation apparatus. This is Methionyl-tRNA formyltransferase from Xylella fastidiosa (strain M12).